We begin with the raw amino-acid sequence, 148 residues long: 3-hydroxyacyl-[acyl-carrier-protein] dehydratase FabZ (148 aa).

His-48 is an active-site residue.

Belongs to the thioester dehydratase family. FabZ subfamily.

It localises to the cytoplasm. The catalysed reaction is a (3R)-hydroxyacyl-[ACP] = a (2E)-enoyl-[ACP] + H2O. Involved in unsaturated fatty acids biosynthesis. Catalyzes the dehydration of short chain beta-hydroxyacyl-ACPs and long chain saturated and unsaturated beta-hydroxyacyl-ACPs. This Campylobacter concisus (strain 13826) protein is 3-hydroxyacyl-[acyl-carrier-protein] dehydratase FabZ.